A 76-amino-acid polypeptide reads, in one-letter code: Small ribosomal subunit protein bS18 (76 aa).

It belongs to the bacterial ribosomal protein bS18 family. Part of the 30S ribosomal subunit. Forms a tight heterodimer with protein bS6.

Functionally, binds as a heterodimer with protein bS6 to the central domain of the 16S rRNA, where it helps stabilize the platform of the 30S subunit. The protein is Small ribosomal subunit protein bS18 of Mesoplasma florum (strain ATCC 33453 / NBRC 100688 / NCTC 11704 / L1) (Acholeplasma florum).